Here is an 81-residue protein sequence, read N- to C-terminus: Photosystem I iron-sulfur center (81 aa).

2 4Fe-4S ferredoxin-type domains span residues 2–31 and 39–68; these read AHSV…MVPW and IASA…VRVY. Residues Cys11, Cys14, Cys17, Cys21, Cys48, Cys51, Cys54, and Cys58 each coordinate [4Fe-4S] cluster.

As to quaternary structure, the eukaryotic PSI reaction center is composed of at least 11 subunits. Requires [4Fe-4S] cluster as cofactor.

It localises to the plastid. It is found in the chloroplast thylakoid membrane. It catalyses the reaction reduced [plastocyanin] + hnu + oxidized [2Fe-2S]-[ferredoxin] = oxidized [plastocyanin] + reduced [2Fe-2S]-[ferredoxin]. Its function is as follows. Apoprotein for the two 4Fe-4S centers FA and FB of photosystem I (PSI); essential for photochemical activity. FB is the terminal electron acceptor of PSI, donating electrons to ferredoxin. The C-terminus interacts with PsaA/B/D and helps assemble the protein into the PSI complex. Required for binding of PsaD and PsaE to PSI. PSI is a plastocyanin/cytochrome c6-ferredoxin oxidoreductase, converting photonic excitation into a charge separation, which transfers an electron from the donor P700 chlorophyll pair to the spectroscopically characterized acceptors A0, A1, FX, FA and FB in turn. This chain is Photosystem I iron-sulfur center, found in Gracilaria tenuistipitata var. liui (Red alga).